The sequence spans 1157 residues: Myosin tail region-interacting protein MTI1 (1157 aa).

The SH3 domain maps to 5-69 (EVPFKVVAQF…PKSFVAVQGS (65 aa)). 2 disordered regions span residues 68–116 (GSEV…GPVP) and 135–156 (TAVSAQVQHDSSSGNGERKVPM). Positions 77-89 (SSPNTGSTEQRTI) are enriched in polar residues. Positions 93-110 (VEQKDLPEPISPETKKET) are enriched in basic and acidic residues. Residue S103 is modified to Phosphoserine. Residues 138–149 (SAQVQHDSSSGN) are compositionally biased toward polar residues. Phosphoserine is present on residues S158 and S166. Disordered regions lie at residues 231–256 (PEPINRAQVESGRIETENDQLKKDLP) and 284–888 (KKAK…PKVA). Coiled coils occupy residues 234-301 (INRA…NKNE) and 356-430 (EKEQ…GASR). 3 stretches are compositionally biased toward basic and acidic residues: residues 242–256 (GRIETENDQLKKDLP), 284–296 (KKAKLEQEHERSA), and 312–383 (NEKT…RGEN). The segment covering 398-411 (EGDNDEEKEEEDSE) has biased composition (acidic residues). Basic and acidic residues-rich tracts occupy residues 412–423 (ENRRAALRERMA) and 506–524 (KTLDPHATTEHEQKQEHGT). Positions 544–558 (DSDEDTDDHEFEDAN) are enriched in acidic residues. A Phosphoserine modification is found at S565. Residues 574 to 585 (GNNESENVNSGE) show a composition bias toward low complexity. Basic and acidic residues predominate over residues 597 to 606 (RTAEVSHDIE). Residues 607–641 (NSSQNTTGNVLPVSSPQTRVARNGSINSLTKSISG) show a composition bias toward polar residues. Phosphoserine is present on residues S621, S631, and S634. Position 636 is a phosphothreonine (T636). Residues S638 and S647 each carry the phosphoserine modification. Residues 642–653 (ENRRKSINEYHD) are compositionally biased toward basic and acidic residues. Positions 654–668 (TVSTNSSALTETAQD) are enriched in polar residues. Pro residues-rich tracts occupy residues 691–738 (PHPV…PVSS) and 747–765 (SIPPVPPTPPAPPAPPAPL). Over residues 769–778 (KHNEVEEHVK) the composition is skewed to basic and acidic residues. Over residues 795 to 808 (NTAPPLPRAPPVPP) the composition is skewed to pro residues. Positions 832–853 (QNVTASTPSMMSTQQRVPTSVL) are enriched in polar residues. Phosphothreonine is present on T850. S889 is modified (phosphoserine). 2 positions are modified to phosphothreonine: T894 and T895. K1012 is covalently cross-linked (Glycyl lysine isopeptide (Lys-Gly) (interchain with G-Cter in ubiquitin)).

In terms of assembly, binds to the SH3 domains of the type I myosins MYO3 and MYO5.

Its subcellular location is the cytoplasm. It is found in the cytoskeleton. The protein localises to the actin patch. Its function is as follows. Involved in the regulation of actin cytoskeleton. This is Myosin tail region-interacting protein MTI1 (BBC1) from Saccharomyces cerevisiae (strain ATCC 204508 / S288c) (Baker's yeast).